The sequence spans 310 residues: MSHEKSVTEFTRDLVGVYINAGVVKSYAKDTKGNTRLYELSNKEIMDIGIEIHSICETDEKEYIDIDYCTEADLKIIRLANTISLLNQLHVAGRVCELPIKTLVHGTSLRGIIDRIIWNKDKKEIEVIDIKSHYIPFILDDPELKGMPQSKRLGYSFQLHVYVEMLDWLFTASPDALRDSFIGSIYNKDEPIHPIICSKLEIPKTITANNLFDILLKERSVFTDVKYTVLIMHIDQNYFKSEYKTGKASVVYESIKCNREWFKKMVFFDLAELERKKSLAEIHKKAAMAKKREEKKKIKQELKKSAKGKK.

The stretch at 269–307 (DLAELERKKSLAEIHKKAAMAKKREEKKKIKQELKKSAK) forms a coiled coil. Over residues 290 to 304 (KKREEKKKIKQELKK) the composition is skewed to basic and acidic residues. The disordered stretch occupies residues 290 to 310 (KKREEKKKIKQELKKSAKGKK).

This is an uncharacterized protein from Magallana gigas (Pacific oyster).